Consider the following 135-residue polypeptide: Ribonuclease VapC5 (135 aa).

Positions 9–130 (VLDTSVFIAT…FAALDGAASV (122 aa)) constitute a PINc domain. 2 residues coordinate Mg(2+): Asp-11 and Asp-100.

It belongs to the PINc/VapC protein family. Forms a complex with VapB5. Requires Mg(2+) as cofactor.

Its subcellular location is the secreted. Functionally, probable toxic component of a type II toxin-antitoxin (TA) system. The cognate antitoxin is VapB5. Has limited RNase activity on substrates; activity is seen with a VapC5-VapB5 complex. The protein is Ribonuclease VapC5 of Mycobacterium tuberculosis (strain ATCC 25618 / H37Rv).